Consider the following 45-residue polypeptide: Large ribosomal subunit protein bL34c (45 aa).

Residues 1–21 form a disordered region; that stretch reads MIQRTLTGTNRKKTKRSGFRS. Basic residues predominate over residues 10 to 19; that stretch reads NRKKTKRSGF.

It belongs to the bacterial ribosomal protein bL34 family.

It localises to the plastid. It is found in the chloroplast. This Cyanidium caldarium (Red alga) protein is Large ribosomal subunit protein bL34c (rpl34).